The sequence spans 519 residues: Lysine 5,6-aminomutase alpha subunit (519 aa).

57–59 contributes to the adenosylcob(III)alamin binding site; it reads DEV. Residues 187–192, Ser241, Tyr266, Arg271, and Asn302 each bind pyridoxal 5'-phosphate; that span reads RTTGQS.

Belongs to the KamD family. In terms of assembly, heterotetramer of 2 alpha and 2 beta subunits. Requires adenosylcob(III)alamin as cofactor. The cofactor is pyridoxal 5'-phosphate.

The catalysed reaction is (3S)-3,6-diaminohexanoate = (3S,5S)-3,5-diaminohexanoate. It carries out the reaction D-lysine = (2R,5S)-2,5-diaminohexanoate. It functions in the pathway amino-acid metabolism; lysine degradation. Rapidly inactivated in the presence of D-lysine and to a lesser extent in the absence of adenosylcobalamin (Adocbl). Activity is stable in the presence of Adocbl when D-lysine is absent. Adocbl imparts thermal stability at 37 degrees Celsius. Catalyzes the migration of the L-beta-lysine and D-lysine epsilon amino group to the delta carbon to produce 3,5-diaminohexanoate and 2,5-diaminohexanoate, respectively. The chain is Lysine 5,6-aminomutase alpha subunit (kamD) from Acetoanaerobium sticklandii (strain ATCC 12662 / DSM 519 / JCM 1433 / CCUG 9281 / NCIMB 10654 / HF) (Clostridium sticklandii).